A 450-amino-acid polypeptide reads, in one-letter code: Tubulin alpha-5 chain (450 aa).

Gln11, Glu71, Gly144, Thr145, Thr179, Asn206, and Asn228 together coordinate GTP. Position 71 (Glu71) interacts with Mg(2+). Glu254 is a catalytic residue.

This sequence belongs to the tubulin family. In terms of assembly, dimer of alpha and beta chains. A typical microtubule is a hollow water-filled tube with an outer diameter of 25 nm and an inner diameter of 15 nM. Alpha-beta heterodimers associate head-to-tail to form protofilaments running lengthwise along the microtubule wall with the beta-tubulin subunit facing the microtubule plus end conferring a structural polarity. Microtubules usually have 13 protofilaments but different protofilament numbers can be found in some organisms and specialized cells. Requires Mg(2+) as cofactor. Undergoes a tyrosination/detyrosination cycle, the cyclic removal and re-addition of a C-terminal tyrosine residue by the enzymes tubulin tyrosine carboxypeptidase (TTCP) and tubulin tyrosine ligase (TTL), respectively.

It localises to the cytoplasm. It is found in the cytoskeleton. The enzyme catalyses GTP + H2O = GDP + phosphate + H(+). In terms of biological role, tubulin is the major constituent of microtubules, a cylinder consisting of laterally associated linear protofilaments composed of alpha- and beta-tubulin heterodimers. Microtubules grow by the addition of GTP-tubulin dimers to the microtubule end, where a stabilizing cap forms. Below the cap, tubulin dimers are in GDP-bound state, owing to GTPase activity of alpha-tubulin. The sequence is that of Tubulin alpha-5 chain (TUBA5) from Zea mays (Maize).